The following is a 312-amino-acid chain: Acetyl-coenzyme A carboxylase carboxyl transferase subunit alpha (312 aa).

In terms of domain architecture, CoA carboxyltransferase C-terminal spans Asn-36–Glu-286.

This sequence belongs to the AccA family. In terms of assembly, acetyl-CoA carboxylase is a heterohexamer composed of biotin carboxyl carrier protein (AccB), biotin carboxylase (AccC) and two subunits each of ACCase subunit alpha (AccA) and ACCase subunit beta (AccD).

The protein localises to the cytoplasm. The enzyme catalyses N(6)-carboxybiotinyl-L-lysyl-[protein] + acetyl-CoA = N(6)-biotinyl-L-lysyl-[protein] + malonyl-CoA. The protein operates within lipid metabolism; malonyl-CoA biosynthesis; malonyl-CoA from acetyl-CoA: step 1/1. In terms of biological role, component of the acetyl coenzyme A carboxylase (ACC) complex. First, biotin carboxylase catalyzes the carboxylation of biotin on its carrier protein (BCCP) and then the CO(2) group is transferred by the carboxyltransferase to acetyl-CoA to form malonyl-CoA. The protein is Acetyl-coenzyme A carboxylase carboxyl transferase subunit alpha of Campylobacter jejuni subsp. jejuni serotype O:23/36 (strain 81-176).